Here is a 271-residue protein sequence, read N- to C-terminus: Tryptophan synthase alpha chain (271 aa).

Catalysis depends on proton acceptor residues Glu-49 and Asp-60.

It belongs to the TrpA family. Tetramer of two alpha and two beta chains.

The catalysed reaction is (1S,2R)-1-C-(indol-3-yl)glycerol 3-phosphate + L-serine = D-glyceraldehyde 3-phosphate + L-tryptophan + H2O. The protein operates within amino-acid biosynthesis; L-tryptophan biosynthesis; L-tryptophan from chorismate: step 5/5. In terms of biological role, the alpha subunit is responsible for the aldol cleavage of indoleglycerol phosphate to indole and glyceraldehyde 3-phosphate. In Azoarcus sp. (strain BH72), this protein is Tryptophan synthase alpha chain.